The chain runs to 231 residues: Urease subunit gamma/beta (231 aa).

The segment at 1–101 (MLLTPTELER…LVTVHQPIRP (101 aa)) is urease gamma. A urease beta region spans residues 102–231 (GQLPLAVMPT…RARAQFFKGA (130 aa)).

This sequence in the N-terminal section; belongs to the urease gamma subunit family. The protein in the C-terminal section; belongs to the urease beta subunit family. In terms of assembly, heterohexamer of 3 UreC (alpha) and 3 UreAB (gamma/beta) subunits.

It is found in the cytoplasm. The catalysed reaction is urea + 2 H2O + H(+) = hydrogencarbonate + 2 NH4(+). The protein operates within nitrogen metabolism; urea degradation; CO(2) and NH(3) from urea (urease route): step 1/1. This chain is Urease subunit gamma/beta, found in Pseudomonas syringae pv. syringae (strain B728a).